The following is a 384-amino-acid chain: Probable inactive linolenate hydroperoxide lyase (384 aa).

C346 contacts heme.

The protein belongs to the cytochrome P450 family. It depends on heme as a cofactor. As to expression, expressed in roots, leaves, flowers and siliques.

This is Probable inactive linolenate hydroperoxide lyase from Arabidopsis thaliana (Mouse-ear cress).